Here is an 84-residue protein sequence, read N- to C-terminus: Small ribosomal subunit protein uS17 (84 aa).

Belongs to the universal ribosomal protein uS17 family. As to quaternary structure, part of the 30S ribosomal subunit.

Its function is as follows. One of the primary rRNA binding proteins, it binds specifically to the 5'-end of 16S ribosomal RNA. The protein is Small ribosomal subunit protein uS17 of Photorhabdus laumondii subsp. laumondii (strain DSM 15139 / CIP 105565 / TT01) (Photorhabdus luminescens subsp. laumondii).